A 131-amino-acid polypeptide reads, in one-letter code: Small ribosomal subunit protein bS6 (131 aa).

A disordered region spans residues 96–131 (VTEASPMVKAKDERRERRDDFANETADDAEAGDSEE). The segment covering 104–116 (KAKDERRERRDDF) has biased composition (basic and acidic residues). A compositionally biased stretch (acidic residues) spans 120–131 (TADDAEAGDSEE).

The protein belongs to the bacterial ribosomal protein bS6 family.

Binds together with bS18 to 16S ribosomal RNA. This is Small ribosomal subunit protein bS6 from Salmonella arizonae (strain ATCC BAA-731 / CDC346-86 / RSK2980).